The following is a 67-amino-acid chain: Small ribosomal subunit protein eS17 (67 aa).

It belongs to the eukaryotic ribosomal protein eS17 family.

The protein is Small ribosomal subunit protein eS17 of Thermococcus onnurineus (strain NA1).